Here is a 381-residue protein sequence, read N- to C-terminus: NF-kappa-B inhibitor-like protein 1 (381 aa).

The tract at residues 1-34 (MSNPSPQAPEEEASTSVCRPQSCSMASASRRHRR) is disordered. A compositionally biased stretch (polar residues) spans 14-27 (STSVCRPQSCSMAS). 2 ANK repeats span residues 64-93 (AGQP…ADPA) and 97-134 (RHGD…IKNK). 2 disordered regions span residues 132–167 (KNKD…REWR) and 186–298 (EDDA…WRFG). At Ser151 the chain carries Phosphoserine. Over residues 151-160 (SAEEEEDEEV) the composition is skewed to acidic residues. 2 stretches are compositionally biased toward basic and acidic residues: residues 205 to 218 (RLAR…RQQL) and 237 to 290 (RQHE…RGAE).

In terms of assembly, interacts with CACTIN (via N-terminal domain); the interaction occurs in a pro-inflammatory-independent manner. As to expression, high expression found in heart muscle, liver, kidney and skin. Not detected in spleen, lung and brain.

Its subcellular location is the nucleus. Its function is as follows. Involved in the regulation of innate immune response. Acts as negative regulator of Toll-like receptor and interferon-regulatory factor (IRF) signaling pathways. Contributes to the negative regulation of transcriptional activation of NF-kappa-B target genes in response to endogenous pro-inflammatory stimuli. This chain is NF-kappa-B inhibitor-like protein 1 (Nfkbil1), found in Mus musculus (Mouse).